Reading from the N-terminus, the 206-residue chain is Small ribosomal subunit protein uS4 (206 aa).

The disordered stretch occupies residues 28 to 48 (YMERRPYGPGEHGRARKKQDS). The region spanning 95 to 160 (MRLDALVLRA…MPPFQVAAAG (66 aa)) is the S4 RNA-binding domain.

This sequence belongs to the universal ribosomal protein uS4 family. Part of the 30S ribosomal subunit. Contacts protein S5. The interaction surface between S4 and S5 is involved in control of translational fidelity.

Its function is as follows. One of the primary rRNA binding proteins, it binds directly to 16S rRNA where it nucleates assembly of the body of the 30S subunit. In terms of biological role, with S5 and S12 plays an important role in translational accuracy. In Paenarthrobacter aurescens (strain TC1), this protein is Small ribosomal subunit protein uS4.